Reading from the N-terminus, the 326-residue chain is Nicotianamine synthase 2 (326 aa).

It belongs to the nicotianamine synthase (NAS)-like family. Expressed in roots.

It catalyses the reaction 3 S-adenosyl-L-methionine = nicotianamine + 3 S-methyl-5'-thioadenosine + 3 H(+). Its function is as follows. Synthesizes nicotianamine, a polyamine that is the first intermediate in the synthesis of the phytosiderophores of the mugineic acid type found in gramineae which serve as a sensor for the physiological iron status within the plant, and/or might be involved in the transport of iron. This chain is Nicotianamine synthase 2 (NAS2), found in Oryza sativa subsp. indica (Rice).